The primary structure comprises 432 residues: Peptidase B (432 aa).

The Mn(2+) site is built by K196 and D201. K208 is a catalytic residue. Mn(2+) is bound by residues D219, D278, and E280. R282 is an active-site residue.

This sequence belongs to the peptidase M17 family. Homohexamer. Mn(2+) is required as a cofactor.

It is found in the cytoplasm. The catalysed reaction is Release of an N-terminal amino acid, Xaa, from a peptide or arylamide. Xaa is preferably Glu or Asp but may be other amino acids, including Leu, Met, His, Cys and Gln.. In terms of biological role, probably plays an important role in intracellular peptide degradation. This chain is Peptidase B, found in Yersinia pseudotuberculosis serotype O:1b (strain IP 31758).